The sequence spans 897 residues: F-BAR domain only protein 1 (897 aa).

The interval 1–276 (MIHFFHTLQG…VGFEEYLSSL (276 aa)) is mediates membrane-binding. The F-BAR domain occupies 2 to 248 (IHFFHTLQGE…NVENIGIENL (247 aa)). Positions 134–154 (LQKTREGYHSKCVELERLRKE) form a coiled coil. The disordered stretch occupies residues 475 to 537 (VEDSGLDSPS…PNPAPSSQSN (63 aa)). The segment covering 501–520 (PSSQSQSKDSINAASQSRGG) has biased composition (polar residues). In terms of domain architecture, MHD spans 630–894 (SWPVAAAITE…RFATGKYMAG (265 aa)).

The protein belongs to the FCHO family. As to quaternary structure, may oligomerize and form homotetramer. Interacts with acvr1l/alk8; linking this receptor to clathrin-mediated endocytosis.

Its subcellular location is the membrane. It is found in the clathrin-coated pit. Functionally, may function in an early step of clathrin-mediated endocytosis. May regulate Bmp signaling by regulating clathrin-mediated endocytosis of Bmp receptors. This chain is F-BAR domain only protein 1 (fcho1), found in Danio rerio (Zebrafish).